Reading from the N-terminus, the 309-residue chain is Serine/threonine-protein phosphatase 2A catalytic subunit alpha isoform (309 aa).

Positions 57, 59, 85, and 117 each coordinate Mn(2+). Residues D57, H59, and D85 each coordinate Zn(2+). 2 residues coordinate Fe(3+): D85 and N117. Residue H118 is the Proton donor of the active site. Residues H167 and H241 each contribute to the Mn(2+) site. 2 residues coordinate Fe(3+): H167 and H241. The residue at position 307 (Y307) is a Phosphotyrosine. Residue L309 is modified to Leucine methyl ester.

This sequence belongs to the PPP phosphatase family. PP-1 subfamily. As to quaternary structure, PP2A consists of a common heterodimeric core enzyme, composed of PPP2CA, a 36 kDa catalytic subunit (subunit C), and PPP2R1A, a 65 kDa constant regulatory subunit (PR65 or subunit A), that associates with a variety of regulatory subunits. Proteins that associate with the core dimer include three families of regulatory subunits B (the R2/B/PR55/B55, R3/B''/PR72/PR130/PR59 and R5/B'/B56 families), the 48 kDa variable regulatory subunit, viral proteins, and cell signaling molecules. May indirectly interact with SGOL1, most probably through regulatory B56 subunits. Phosphatase component of the Integrator-PP2A (INTAC) complex, composed of the Integrator core complex and protein phosphatase 2A subunits PPP2CA and PPP2R1A. Mn(2+) serves as cofactor. It depends on Fe(3+) as a cofactor. Zn(2+) is required as a cofactor. Reversibly methyl esterified on Leu-309 by leucine carboxyl methyltransferase 1 (LCMT1) and protein phosphatase methylesterase 1 (PPME1). Carboxyl methylation influences the affinity of the catalytic subunit for the different regulatory subunits, thereby modulating the PP2A holoenzyme's substrate specificity, enzyme activity and cellular localization. In terms of processing, phosphorylation of either threonine (by autophosphorylation-activated protein kinase) or tyrosine results in inactivation of the phosphatase. Auto-dephosphorylation has been suggested as a mechanism for reactivation.

Its subcellular location is the cytoplasm. It is found in the nucleus. The protein resides in the chromosome. It localises to the centromere. The protein localises to the cytoskeleton. Its subcellular location is the spindle pole. It carries out the reaction O-phospho-L-seryl-[protein] + H2O = L-seryl-[protein] + phosphate. The catalysed reaction is O-phospho-L-threonyl-[protein] + H2O = L-threonyl-[protein] + phosphate. Inhibited by the interaction between PPP2R2A and ARPP19; this inhibition is enhanced when ARPP19 is phosphorylated. Inhibited by the interaction between PPP2R2A and PABIR1/FAM122A. PP2A is the major phosphatase for microtubule-associated proteins (MAPs). PP2A can modulate the activity of phosphorylase B kinase casein kinase 2, mitogen-stimulated S6 kinase, and MAP-2 kinase. Key mediator of a quality checkpoint during transcription elongation as part of the Integrator-PP2A (INTAC) complex. The INTAC complex drives premature transcription termination of transcripts that are unfavorably configured for transcriptional elongation: within the INTAC complex, PPP2CA catalyzes dephosphorylation of the C-terminal domain (CTD) of Pol II subunit POLR2A/RPB1 and SUPT5H/SPT5, thereby preventing transcriptional elongation. This chain is Serine/threonine-protein phosphatase 2A catalytic subunit alpha isoform (PPP2CA), found in Gallus gallus (Chicken).